The primary structure comprises 205 residues: HTH-type transcriptional repressor KstR2 (205 aa).

One can recognise an HTH tetR-type domain in the interval 10-70; that stretch reads ASRRDELLQL…EVLRDFLDWL (61 aa). A DNA-binding region (H-T-H motif) is located at residues 33–52; that stretch reads TVRDIADSAGILSGSLYHHF.

In terms of assembly, homodimer.

Its function is as follows. Controls the expression of a small regulon that may play a role in the utilization of cholesterol. This is HTH-type transcriptional repressor KstR2 (kstR2) from Mycolicibacterium smegmatis (strain ATCC 700084 / mc(2)155) (Mycobacterium smegmatis).